A 103-amino-acid chain; its full sequence is N(4)-acetylcytidine amidohydrolase (103 aa).

The region spanning 6–101 (ITFSQRFQDD…QTQFYVIEFK (96 aa)) is the ASCH domain. Lysine 21 functions as the Proton acceptor in the catalytic mechanism. Threonine 24 acts as the Nucleophile in catalysis. Glutamate 74 acts as the Proton donor in catalysis.

This sequence belongs to the N(4)-acetylcytidine amidohydrolase family.

It catalyses the reaction N(4)-acetylcytidine + H2O = cytidine + acetate + H(+). It carries out the reaction N(4)-acetyl-2'-deoxycytidine + H2O = 2'-deoxycytidine + acetate + H(+). The enzyme catalyses N(4)-acetylcytosine + H2O = cytosine + acetate + H(+). Functionally, catalyzes the hydrolysis of N(4)-acetylcytidine (ac4C). This Shigella boydii serotype 4 (strain Sb227) protein is N(4)-acetylcytidine amidohydrolase (yqfB).